Consider the following 235-residue polypeptide: Transmembrane protein 215 (235 aa).

2 consecutive transmembrane segments (helical) span residues 12–32 (LVVA…VSGM) and 40–60 (IPLL…IALA). Positions 99 to 146 (SDLESGKGSSDELAKKAGLRGKQLPQGPGEVPMASSVTTPTPTEEGEC) are disordered.

The protein resides in the membrane. The chain is Transmembrane protein 215 (Tmem215) from Mus musculus (Mouse).